A 204-amino-acid chain; its full sequence is Methylthioribulose-1-phosphate dehydratase (204 aa).

Residues His96 and His98 each coordinate Zn(2+).

This sequence belongs to the aldolase class II family. MtnB subfamily. It depends on Zn(2+) as a cofactor.

It catalyses the reaction 5-(methylsulfanyl)-D-ribulose 1-phosphate = 5-methylsulfanyl-2,3-dioxopentyl phosphate + H2O. It participates in amino-acid biosynthesis; L-methionine biosynthesis via salvage pathway; L-methionine from S-methyl-5-thio-alpha-D-ribose 1-phosphate: step 2/6. Its function is as follows. Catalyzes the dehydration of methylthioribulose-1-phosphate (MTRu-1-P) into 2,3-diketo-5-methylthiopentyl-1-phosphate (DK-MTP-1-P). The polypeptide is Methylthioribulose-1-phosphate dehydratase (Methylococcus capsulatus (strain ATCC 33009 / NCIMB 11132 / Bath)).